We begin with the raw amino-acid sequence, 582 residues long: Inactive metallocarboxypeptidase ECM14 (582 aa).

Residues 1–20 (MHILQVITGATLVSVPFVSA) form the signal peptide. The propeptide occupies 21–172 (IPSSTSEFLP…QAVYESYPQP (152 aa)). Positions 200 to 522 (DYQPLSVIIP…NAVLVFGQFL (323 aa)) constitute a Peptidase M14 domain. Zn(2+) is bound by residues His265 and Glu268. Residues 265–268 (HARE), Arg323, and 340–341 (DR) contribute to the substrate site. An intrachain disulfide couples Cys334 to Cys357. Residues Asn381 and Asn387 are each glycosylated (N-linked (GlcNAc...) asparagine). A Zn(2+)-binding site is contributed by His397. Substrate is bound at residue 398 to 399 (SY). The span at 561–571 (SNQLEDDDNEN) shows a compositional bias: acidic residues. Positions 561-582 (SNQLEDDDNENDTLLGFRTQKV) are disordered. Asn571 carries N-linked (GlcNAc...) asparagine glycosylation.

The protein belongs to the peptidase M14 family. It depends on Zn(2+) as a cofactor.

It localises to the vacuole. The protein resides in the secreted. Inactive carboxypeptidase that may play a role in cell wall organization and biogenesis. The protein is Inactive metallocarboxypeptidase ECM14 (ECM14) of Coccidioides posadasii (strain C735) (Valley fever fungus).